We begin with the raw amino-acid sequence, 801 residues long: Sucrose synthase isoform 2 (801 aa).

Residues 271–748 (MIFNVVILSP…GLKRIQEKYT (478 aa)) are GT-B glycosyltransferase.

This sequence belongs to the glycosyltransferase 1 family. Plant sucrose synthase subfamily. In terms of assembly, homotetramer. Exclusively expressed in flowers.

It catalyses the reaction an NDP-alpha-D-glucose + D-fructose = a ribonucleoside 5'-diphosphate + sucrose + H(+). Sucrose-cleaving enzyme that provides UDP-glucose and fructose for various metabolic pathways. This is Sucrose synthase isoform 2 from Daucus carota (Wild carrot).